Reading from the N-terminus, the 285-residue chain is Diaminopimelate epimerase 2 (285 aa).

Substrate is bound by residues Asn-11, Asn-63, 73 to 74 (GN), Asn-158, Asn-191, 209 to 210 (ER), and 219 to 220 (GS).

This sequence belongs to the diaminopimelate epimerase family. In terms of assembly, homodimer.

It localises to the cytoplasm. It catalyses the reaction (2S,6S)-2,6-diaminopimelate = meso-2,6-diaminopimelate. It participates in amino-acid biosynthesis; L-lysine biosynthesis via DAP pathway; DL-2,6-diaminopimelate from LL-2,6-diaminopimelate: step 1/1. Its function is as follows. Catalyzes the stereoinversion of LL-2,6-diaminopimelate (L,L-DAP) to meso-diaminopimelate (meso-DAP), a precursor of L-lysine and an essential component of the bacterial peptidoglycan. This is Diaminopimelate epimerase 2 from Nostoc sp. (strain PCC 7120 / SAG 25.82 / UTEX 2576).